Reading from the N-terminus, the 527-residue chain is Protein TIC 56, chloroplastic (527 aa).

A chloroplast-targeting transit peptide spans Met1–Lys48. A disordered region spans residues Ser43 to Tyr67. Asn350 is subject to Deamidated asparagine. The segment covering Arg491 to Thr508 has biased composition (basic and acidic residues). The segment at Arg491–Asp527 is disordered. A compositionally biased stretch (acidic residues) spans Asp509–Asp521.

As to quaternary structure, part of the Tic complex. Component of the 1-MD complex, composed of TIC20-I, TIC214, TIC100 and TIC56. Interacts with the translocating preproteins. Hydrolysis of ATP is essential for the formation of this complex. The 1-MD complex interacts with TIC21.

Its subcellular location is the plastid. It localises to the chloroplast inner membrane. In terms of biological role, involved in protein precursor import into chloroplasts. May be part of an intermediate translocation complex acting as a protein-conducting channel at the inner envelope. This chain is Protein TIC 56, chloroplastic, found in Arabidopsis thaliana (Mouse-ear cress).